We begin with the raw amino-acid sequence, 158 residues long: MSIYDIAVENYDGSTYLLKRYKGKVLIIVNTATNCTLNDQFNKLEMLYKKYHKYGLEILSFPCNDFNNQEPGLIKDIYRVYKYKFGITFPIHAKINVNGEHEHPLYTLLKCKQPGLFGSQIKWNFTKFVVDQQGNIVKRFLPCDNPNQMEKLIRQLLK.

Residue Thr36 is part of the active site.

This sequence belongs to the glutathione peroxidase family.

The polypeptide is Glutathione peroxidase homolog BsaA (bsaA) (Staphylococcus epidermidis (strain ATCC 35984 / DSM 28319 / BCRC 17069 / CCUG 31568 / BM 3577 / RP62A)).